We begin with the raw amino-acid sequence, 150 residues long: Arginine repressor (150 aa).

This sequence belongs to the ArgR family.

It is found in the cytoplasm. It participates in amino-acid biosynthesis; L-arginine biosynthesis [regulation]. Regulates arginine biosynthesis genes. This chain is Arginine repressor, found in Symbiobacterium thermophilum (strain DSM 24528 / JCM 14929 / IAM 14863 / T).